A 175-amino-acid chain; its full sequence is Co-chaperone protein HscB homolog (175 aa).

In terms of domain architecture, J spans 7-79 (SHFDLFHLPA…LKRASYLLSL (73 aa)).

The protein belongs to the HscB family. In terms of assembly, interacts with HscA and stimulates its ATPase activity.

Functionally, co-chaperone involved in the maturation of iron-sulfur cluster-containing proteins. Seems to help targeting proteins to be folded toward HscA. This is Co-chaperone protein HscB homolog from Burkholderia cenocepacia (strain ATCC BAA-245 / DSM 16553 / LMG 16656 / NCTC 13227 / J2315 / CF5610) (Burkholderia cepacia (strain J2315)).